Reading from the N-terminus, the 467-residue chain is 3-isopropylmalate dehydratase large subunit (467 aa).

Cys349, Cys409, and Cys412 together coordinate [4Fe-4S] cluster.

This sequence belongs to the aconitase/IPM isomerase family. LeuC type 1 subfamily. In terms of assembly, heterodimer of LeuC and LeuD. [4Fe-4S] cluster is required as a cofactor.

It carries out the reaction (2R,3S)-3-isopropylmalate = (2S)-2-isopropylmalate. The protein operates within amino-acid biosynthesis; L-leucine biosynthesis; L-leucine from 3-methyl-2-oxobutanoate: step 2/4. Functionally, catalyzes the isomerization between 2-isopropylmalate and 3-isopropylmalate, via the formation of 2-isopropylmaleate. The protein is 3-isopropylmalate dehydratase large subunit of Vibrio cholerae serotype O1 (strain ATCC 39541 / Classical Ogawa 395 / O395).